We begin with the raw amino-acid sequence, 60 residues long: Bowman-Birk type proteinase inhibitor C1 (60 aa).

4 disulfide bridges follow: Cys-5–Cys-21, Cys-11–Cys-19, Cys-28–Cys-35, and Cys-32–Cys-49.

It belongs to the Bowman-Birk serine protease inhibitor family. Expressed in bulb (at protein level).

Serine protease inhibitor. Strongly inhibits trypsin (Ki = 0.22 nM) and very weakly inhibits chymotrypsin (Ki = 1200 nM). Does not inhibit bacterial subtilisin. In Hyacinthus orientalis (Common hyacinth), this protein is Bowman-Birk type proteinase inhibitor C1.